We begin with the raw amino-acid sequence, 288 residues long: Bifunctional protein FolD (288 aa).

NADP(+)-binding positions include 166-168 (GAS) and Ile232.

It belongs to the tetrahydrofolate dehydrogenase/cyclohydrolase family. Homodimer.

It carries out the reaction (6R)-5,10-methylene-5,6,7,8-tetrahydrofolate + NADP(+) = (6R)-5,10-methenyltetrahydrofolate + NADPH. The enzyme catalyses (6R)-5,10-methenyltetrahydrofolate + H2O = (6R)-10-formyltetrahydrofolate + H(+). It functions in the pathway one-carbon metabolism; tetrahydrofolate interconversion. Functionally, catalyzes the oxidation of 5,10-methylenetetrahydrofolate to 5,10-methenyltetrahydrofolate and then the hydrolysis of 5,10-methenyltetrahydrofolate to 10-formyltetrahydrofolate. In Salmonella arizonae (strain ATCC BAA-731 / CDC346-86 / RSK2980), this protein is Bifunctional protein FolD.